Here is an 82-residue protein sequence, read N- to C-terminus: UPF0335 protein pRhico085 (82 aa).

Belongs to the UPF0335 family.

The sequence is that of UPF0335 protein pRhico085 from Azospirillum brasilense.